The chain runs to 275 residues: Elongation factor Ts (275 aa).

An involved in Mg(2+) ion dislocation from EF-Tu region spans residues 76–79 (TDFV).

Belongs to the EF-Ts family.

It localises to the cytoplasm. Associates with the EF-Tu.GDP complex and induces the exchange of GDP to GTP. It remains bound to the aminoacyl-tRNA.EF-Tu.GTP complex up to the GTP hydrolysis stage on the ribosome. This chain is Elongation factor Ts, found in Corynebacterium kroppenstedtii (strain DSM 44385 / JCM 11950 / CIP 105744 / CCUG 35717).